The primary structure comprises 369 residues: 3-dehydroquinate synthase (369 aa).

Residues 110–114 (GVIGD), 134–135 (TT), Lys-147, Lys-156, and 174–177 (TLKT) each bind NAD(+). Residues Glu-189, His-254, and His-271 each coordinate Zn(2+).

The protein belongs to the sugar phosphate cyclases superfamily. Dehydroquinate synthase family. It depends on Co(2+) as a cofactor. Requires Zn(2+) as cofactor. NAD(+) serves as cofactor.

It localises to the cytoplasm. The enzyme catalyses 7-phospho-2-dehydro-3-deoxy-D-arabino-heptonate = 3-dehydroquinate + phosphate. The protein operates within metabolic intermediate biosynthesis; chorismate biosynthesis; chorismate from D-erythrose 4-phosphate and phosphoenolpyruvate: step 2/7. Its function is as follows. Catalyzes the conversion of 3-deoxy-D-arabino-heptulosonate 7-phosphate (DAHP) to dehydroquinate (DHQ). The chain is 3-dehydroquinate synthase from Cyanothece sp. (strain PCC 7425 / ATCC 29141).